The primary structure comprises 337 residues: Mannan polymerase complex subunit mnn9 (337 aa).

At 1-8 the chain is on the cytoplasmic side; it reads MRVYNKSR. Residues 9 to 29 form a helical; Signal-anchor for type II membrane protein membrane-spanning segment; it reads IVGQLLFVALGITFIYYLFTP. Residues 30–337 lie on the Lumenal side of the membrane; the sequence is SVNSNAKVQI…PYYLVFHHNE (308 aa).

It belongs to the ANP1/MMN9/VAN1 family.

The protein resides in the endoplasmic reticulum membrane. It localises to the golgi apparatus membrane. It participates in protein modification; protein glycosylation. Functionally, required for the addition of the long alpha 1,6-mannose backbone of N-linked glycans on cell wall and periplasmic proteins. The sequence is that of Mannan polymerase complex subunit mnn9 from Schizosaccharomyces pombe (strain 972 / ATCC 24843) (Fission yeast).